Here is a 253-residue protein sequence, read N- to C-terminus: Small ribosomal subunit protein uS2 (253 aa).

Serine 2 carries the post-translational modification N-acetylserine. The segment at glutamine 212 to tryptophan 253 is disordered. The span at alanine 219 to glutamate 238 shows a compositional bias: acidic residues.

This sequence belongs to the universal ribosomal protein uS2 family. In terms of assembly, component of the small ribosomal subunit. Mature ribosomes consist of a small (40S) and a large (60S) subunit. The 40S subunit contains about 33 different proteins and 1 molecule of RNA (18S). The 60S subunit contains about 49 different proteins and 3 molecules of RNA (25S, 5.8S and 5S). Interacts with RPS21.

It is found in the cytoplasm. In terms of biological role, required for the assembly and/or stability of the 40S ribosomal subunit. Required for the processing of the 20S rRNA-precursor to mature 18S rRNA in a late step of the maturation of 40S ribosomal subunits. This is Small ribosomal subunit protein uS2 from Eremothecium gossypii (strain ATCC 10895 / CBS 109.51 / FGSC 9923 / NRRL Y-1056) (Yeast).